The chain runs to 569 residues: Urease subunit alpha (569 aa).

The 439-residue stretch at 131-569 folds into the Urease domain; sequence GSIDTHIHFI…VPMAQRYFLL (439 aa). Residues His136, His138, and Lys219 each contribute to the Ni(2+) site. At Lys219 the chain carries N6-carboxylysine. Substrate is bound at residue His221. Positions 248 and 274 each coordinate Ni(2+). His322 serves as the catalytic Proton donor. Asp362 is a Ni(2+) binding site.

This sequence belongs to the metallo-dependent hydrolases superfamily. Urease alpha subunit family. In terms of assembly, heterotrimer of UreA (gamma), UreB (beta) and UreC (alpha) subunits. Three heterotrimers associate to form the active enzyme. It depends on Ni cation as a cofactor. In terms of processing, carboxylation allows a single lysine to coordinate two nickel ions.

Its subcellular location is the cytoplasm. The enzyme catalyses urea + 2 H2O + H(+) = hydrogencarbonate + 2 NH4(+). Its pathway is nitrogen metabolism; urea degradation; CO(2) and NH(3) from urea (urease route): step 1/1. This Prochlorococcus marinus (strain MIT 9215) protein is Urease subunit alpha.